The following is a 435-amino-acid chain: MKTSLFKSLYFQVLTAIAIGILLGHYYPELGAQMKPLGDAFVKLIKMIIAPVIFCTVVTGIAGMESMKAVGRTGAVALLYFEIVSTIALIIGLIIVNVVQPGAGMNVDPATLDAQAVAVYAAQAKEQGIIAFLMDVIPGSVIGAFASGNILQVLLFAVLFGFALHRLGSKGQLIFNVIESFSQVIFGIINMIMRLAPIGAFGAMAFTIGKYGVGSLVQLGQLIICFYITCILFVVVVLGTIARVTGFSIFKFIRYIREELLIVLGTSSSESALPRMLDKMEKLGCRKSVVGLVIPTGYSFNLDGTSIYLTMAAVFIAQATNSHMDIFHQITLLVVLLLSSKGVAGVTGSGFIVLAATISAVGHLPVAGLALILGIDRFMSEARALTNLVGNGVATVVVAKWVKELDHQKLDDVLNNRAPDGKTHEISSYSRHLCP.

The next 9 membrane-spanning stretches (helical) occupy residues 4–24 (SLFKSLYFQVLTAIAIGILLG), 44–64 (LIKMIIAPVIFCTVVTGIAGM), 76–96 (VALLYFEIVSTIALIIGLIIV), 142–162 (IGAFASGNILQVLLFAVLFGF), 184–204 (VIFGIINMIMRLAPIGAFGAM), 222–242 (LIICFYITCILFVVVVLGTIA), 289–309 (VVGLVIPTGYSFNLDGTSIYL), 326–346 (IFHQITLLVVLLLSSKGVAGV), and 352–372 (IVLAATISAVGHLPVAGLALI).

It belongs to the dicarboxylate/amino acid:cation symporter (DAACS) (TC 2.A.23) family.

The protein localises to the cell inner membrane. Functionally, responsible for the transport of dicarboxylates such as succinate, fumarate, and malate from the periplasm across the membrane. This Salmonella paratyphi A (strain ATCC 9150 / SARB42) protein is C4-dicarboxylate transport protein.